The primary structure comprises 464 residues: ERO1-like protein alpha (464 aa).

The N-terminal stretch at 1-23 is a signal peptide; the sequence is MGRGWGLLVGLLGVVWLLRSGQG. 8 cysteine pairs are disulfide-bonded: cysteine 35–cysteine 48, cysteine 37–cysteine 46, cysteine 85–cysteine 387, cysteine 94–cysteine 99, cysteine 94–cysteine 130, cysteine 99–cysteine 104, cysteine 207–cysteine 237, and cysteine 390–cysteine 393. Residues serine 106, serine 142, and serine 144 each carry the phosphoserine modification. The FAD site is built by arginine 186, threonine 188, and tryptophan 199. Positions 248 and 251 each coordinate FAD. Asparagine 276 carries N-linked (GlcNAc...) asparagine glycosylation. Residues arginine 283 and arginine 296 each coordinate FAD. N-linked (GlcNAc...) asparagine glycosylation occurs at asparagine 380.

Belongs to the EROs family. Predominantly monomer. May function both as a monomer and a homodimer. Interacts with PDILT. Interacts with ERP44; the interaction results in retention of ERO1A in the endoplasmic reticulum. FAD is required as a cofactor. N-glycosylated. In terms of processing, the Cys-94/Cys-99 and Cys-390/Cys-393 disulfide bonds constitute the redox-active center. The Cys-94/Cys-99 disulfide bond may accept electron from P4HB and funnel them to the active site disulfide Cys-390/Cys-393. The regulatory Cys-99/Cys-104 disulfide bond stabilizes the other regulatory bond Cys-94/Cys-130. Post-translationally, phosphorylated on Ser-144 by FAM20C in the Golgi which increases its enzymatic activity. Phosphorylation is induced by lactation. It is also induced by hypoxia and reductive stress.

The protein resides in the endoplasmic reticulum membrane. The protein localises to the golgi apparatus lumen. Its subcellular location is the secreted. It localises to the cell projection. It is found in the dendrite. Enzyme activity is tightly regulated to prevent the accumulation of reactive oxygen species in the endoplasmic reticulum. Reversibly down-regulated by the formation of disulfide bonds between the active site Cys-94 and Cys-130, and between Cys-99 and Cys-104. Glutathione may be required to regulate its activity in the endoplasmic reticulum. Functionally, oxidoreductase involved in disulfide bond formation in the endoplasmic reticulum. Efficiently reoxidizes P4HB/PDI, the enzyme catalyzing protein disulfide formation, in order to allow P4HB to sustain additional rounds of disulfide formation. Following P4HB reoxidation, passes its electrons to molecular oxygen via FAD, leading to the production of reactive oxygen species (ROS) in the cell. Required for the proper folding of immunoglobulins. Plays an important role in ER stress-induced, CHOP-dependent apoptosis by activating the inositol 1,4,5-trisphosphate receptor IP3R1. The protein is ERO1-like protein alpha of Rattus norvegicus (Rat).